The chain runs to 278 residues: ADP-dependent (S)-NAD(P)H-hydrate dehydratase (278 aa).

One can recognise a YjeF C-terminal domain in the interval 5 to 272; it reads TTEIVSRTII…TRIPTYMHRF (268 aa). (6S)-NADPHX contacts are provided by Ala-40, Gly-103, and His-152. Gly-214 serves as a coordination point for AMP. Position 215 (Asp-215) interacts with (6S)-NADPHX.

It belongs to the NnrD/CARKD family. As to quaternary structure, homotetramer. Mg(2+) serves as cofactor.

It carries out the reaction (6S)-NADHX + ADP = AMP + phosphate + NADH + H(+). The enzyme catalyses (6S)-NADPHX + ADP = AMP + phosphate + NADPH + H(+). In terms of biological role, catalyzes the dehydration of the S-form of NAD(P)HX at the expense of ADP, which is converted to AMP. Together with NAD(P)HX epimerase, which catalyzes the epimerization of the S- and R-forms, the enzyme allows the repair of both epimers of NAD(P)HX, a damaged form of NAD(P)H that is a result of enzymatic or heat-dependent hydration. The sequence is that of ADP-dependent (S)-NAD(P)H-hydrate dehydratase from Lactiplantibacillus plantarum (strain ATCC BAA-793 / NCIMB 8826 / WCFS1) (Lactobacillus plantarum).